Here is a 202-residue protein sequence, read N- to C-terminus: Glycolipid transfer protein 1 (202 aa).

Positions 52, 56, 99, and 138 each coordinate a ganglioside GM3 (d18:1(4E)).

It belongs to the GLTP family.

May be involved in glycolipids transfer. The protein is Glycolipid transfer protein 1 of Arabidopsis thaliana (Mouse-ear cress).